The chain runs to 710 residues: E3 ubiquitin-protein ligase TRIM9 (710 aa).

The RING-type zinc-finger motif lies at 10-50 (CPVCGSFYREPIILPCSHNICQACARNILVQTPESESPQSR). Threonine 41 is subject to Phosphothreonine. A phosphoserine mark is found at serine 44, serine 46, serine 49, and serine 53. 2 B box-type zinc fingers span residues 163–212 (AAAL…LVPP) and 224–266 (RKVS…VKAL). Zn(2+) contacts are provided by cysteine 168, cysteine 171, cysteine 193, histidine 198, cysteine 229, histidine 232, cysteine 252, and histidine 258. A coiled-coil region spans residues 273–340 (HKSQLSQALN…KAQLLARVNK (68 aa)). One can recognise a COS domain in the interval 374–432 (IKENDPSGFLQISDALIRRVHLTEDQWGKGTLTPRMTTDFDLSLDNSPLLQSIHQLDFV). A Fibronectin type-III domain is found at 440–535 (VPATPILQLE…KTLVLQTSEV (96 aa)). The 170-residue stretch at 533-702 (SEVAWFAFDP…LHTGLQVPDF (170 aa)) folds into the B30.2/SPRY domain.

This sequence belongs to the TRIM/RBCC family. In terms of assembly, interacts with SNAP25. Auto-ubiquitinated.

The protein localises to the cytoplasm. Its subcellular location is the cell projection. It is found in the dendrite. It localises to the cytoplasmic vesicle. The protein resides in the secretory vesicle. The protein localises to the synaptic vesicle. Its subcellular location is the synapse. It is found in the cytoskeleton. The catalysed reaction is S-ubiquitinyl-[E2 ubiquitin-conjugating enzyme]-L-cysteine + [acceptor protein]-L-lysine = [E2 ubiquitin-conjugating enzyme]-L-cysteine + N(6)-ubiquitinyl-[acceptor protein]-L-lysine.. It participates in protein modification; protein ubiquitination. Its function is as follows. E3 ubiquitin-protein ligase which ubiquitinates itself in cooperation with an E2 enzyme UBE2D2/UBC4 and serves as a targeting signal for proteasomal degradation. May play a role in regulation of neuronal functions. May act as a regulator of synaptic vesicle exocytosis by controlling the availability of SNAP25 for the SNARE complex formation. The chain is E3 ubiquitin-protein ligase TRIM9 (TRIM9) from Bos taurus (Bovine).